A 355-amino-acid chain; its full sequence is MTKIENDRYLRALLRQPVDRTPVWLMRQAGRYLPEYRQLRAEAGDFMTLCQTPELACEVTLQPLRRFELDAAILFSDILTIPDAMGLGLTFGAGEGPKFAKTIQHQRDVDALPLPDPEGELRYVMDAVRTIKKALAQQVPLIGFSGSPWTLATYMVEGGSSKQFSRIKQMMYREPKLLHGLLSKLAASVTQYLNAQIAAGADAVMIFDTWGGVLSHQDYQEFSLQYMTAIVQGIHRQYDGRTIPVTLFTKGGGQWLEAIAASGCDAIGIDWTTDISAARARVGHKVALQGNMDPAVLQGDDAVVTAKVQEILQQYGNGSGHVFNLGHGITPDIEPARVKTFVDAVHRFSAPYHQS.

Substrate contacts are provided by residues 27-31 (RQAGR), aspartate 77, tyrosine 154, threonine 209, and histidine 327.

It belongs to the uroporphyrinogen decarboxylase family. Homodimer.

It is found in the cytoplasm. It catalyses the reaction uroporphyrinogen III + 4 H(+) = coproporphyrinogen III + 4 CO2. It participates in porphyrin-containing compound metabolism; protoporphyrin-IX biosynthesis; coproporphyrinogen-III from 5-aminolevulinate: step 4/4. In terms of biological role, catalyzes the decarboxylation of four acetate groups of uroporphyrinogen-III to yield coproporphyrinogen-III. This is Uroporphyrinogen decarboxylase from Tolumonas auensis (strain DSM 9187 / NBRC 110442 / TA 4).